The primary structure comprises 852 residues: Protein Shroom1 (852 aa).

An N-acetylmethionine modification is found at Met-1. Phosphoserine is present on Ser-18. Disordered stretches follow at residues 34–54 (SSFSAASGGPEPRTQSPGTDL), 81–109 (TSPRPRPAVAARSGPQPTEVPGTPGPLNR), and 125–218 (AAQA…ANQQ). Thr-103 is modified (phosphothreonine). Positions 125 to 144 (AAQAAEPPSPPASRAAYRQR) are enriched in low complexity. 2 positions are modified to phosphoserine: Ser-133 and Ser-137. In terms of domain architecture, ASD1 spans 145–233 (LQGAQRRVLR…SEPGKLDRVG (89 aa)). The span at 152–164 (VLRETSFQRKELR) shows a compositional bias: basic and acidic residues. Residues Ser-166, Ser-190, and Ser-224 each carry the phosphoserine modification. 4 disordered regions span residues 276–320 (LPET…GSGG), 399–431 (MRSPPDPHASQGPPASVHASDQPYGTGLGQRTG), 464–496 (SRPTSHTPTGTANDNIPTIDPTGLTTNPPTAAE), and 823–852 (DLGHHAPSPSPARPPGTCPPVQPPFPLLLT). A compositionally biased stretch (polar residues) spans 279 to 289 (TQPQGSMNLDS). The segment covering 301–313 (ASRSRSASGEVLG) has biased composition (low complexity). Residues 465 to 479 (RPTSHTPTGTANDNI) show a composition bias toward polar residues. An ASD2 domain is found at 543 to 825 (EELVQELARL…QLDAIRDDLG (283 aa)). Positions 830-852 (SPSPARPPGTCPPVQPPFPLLLT) are enriched in pro residues.

The protein belongs to the shroom family. Interacts with F-actin.

The protein resides in the cytoplasm. Its subcellular location is the cytoskeleton. Functionally, may be involved in the assembly of microtubule arrays during cell elongation. The protein is Protein Shroom1 (SHROOM1) of Homo sapiens (Human).